A 90-amino-acid chain; its full sequence is Small ribosomal subunit protein bS16 (90 aa).

This sequence belongs to the bacterial ribosomal protein bS16 family.

This is Small ribosomal subunit protein bS16 from Heliobacterium modesticaldum (strain ATCC 51547 / Ice1).